A 460-amino-acid polypeptide reads, in one-letter code: Phosphomethylpyrimidine synthase (460 aa).

Residues asparagine 80, methionine 109, tyrosine 138, histidine 174, 194-196 (SRG), 235-238 (DSLR), and glutamate 274 each bind substrate. Zn(2+) is bound at residue histidine 278. Residue tyrosine 301 participates in substrate binding. Histidine 342 is a Zn(2+) binding site. Positions 422, 425, and 430 each coordinate [4Fe-4S] cluster.

The protein belongs to the ThiC family. In terms of assembly, homodimer. [4Fe-4S] cluster serves as cofactor.

It carries out the reaction 5-amino-1-(5-phospho-beta-D-ribosyl)imidazole + S-adenosyl-L-methionine = 4-amino-2-methyl-5-(phosphooxymethyl)pyrimidine + CO + 5'-deoxyadenosine + formate + L-methionine + 3 H(+). The protein operates within cofactor biosynthesis; thiamine diphosphate biosynthesis. Catalyzes the synthesis of the hydroxymethylpyrimidine phosphate (HMP-P) moiety of thiamine from aminoimidazole ribotide (AIR) in a radical S-adenosyl-L-methionine (SAM)-dependent reaction. This chain is Phosphomethylpyrimidine synthase, found in Sulfurimonas denitrificans (strain ATCC 33889 / DSM 1251) (Thiomicrospira denitrificans (strain ATCC 33889 / DSM 1251)).